The sequence spans 258 residues: UPF0246 protein YaaA (258 aa).

It belongs to the UPF0246 family.

This chain is UPF0246 protein YaaA, found in Shigella boydii serotype 18 (strain CDC 3083-94 / BS512).